A 423-amino-acid polypeptide reads, in one-letter code: Citrate synthase-like protein clz17 (423 aa).

Active-site residues include His357 and Asp413.

The protein belongs to the citrate synthase family.

Its pathway is secondary metabolite biosynthesis. Its function is as follows. Citrate synthase-like protein; part of the gene cluster that mediates the biosynthesis of squalestatin S1 (SQS1, also known as zaragozic acid A), a heavily oxidized fungal polyketide that offers potent cholesterol lowering activity by targeting squalene synthase (SS). SQS1 is composed of a 2,8-dioxobicyclic[3.2.1]octane-3,4,5-tricarboxyclic acid core that is connected to two lipophilic polyketide arms. These initial steps feature the priming of an unusual benzoic acid starter unit onto the highly reducing polyketide synthase clz14, followed by oxaloacetate extension and product release to generate a tricarboxylic acid containing product. The phenylalanine ammonia lyase (PAL) clz10 and the acyl-CoA ligase clz12 are involved in transforming phenylalanine into benzoyl-CoA. The citrate synthase-like protein clz17 is involved in connecting the C-alpha-carbons of the hexaketide chain and oxaloacetate to afford the tricarboxylic acid unit. The potential hydrolytic enzymes, clz11 and clz13, are in close proximity to pks2 and may participate in product release. On the other side, the tetraketide arm is synthesized by a the squalestatin tetraketide synthase clz2 and enzymatically esterified to the core in the last biosynthetic step, by the acetyltransferase clz6. The biosynthesis of the tetraketide must involve 3 rounds of chain extension. After the first and second rounds methyl-transfer occurs, and in all rounds of extension the ketoreductase and dehydratase are active. The enoyl reductase and C-MeT of clz2 are not active in the final round of extension. The acetyltransferase clz6 appears to have a broad substrate selectivity for its acyl CoA substrate, allowing the in vitro synthesis of novel squalestatins. The biosynthesis of SQS1 requires several oxidative steps likely performed by oxidoreductases clz3, clz15 and clz16. Finally, in support of the identification of the cluster as being responsible for SQS1 production, the cluster contains a gene encoding a putative squalene synthase (SS) clz20, suggesting a likely mechanism for self-resistance. This Cochliobolus lunatus (Filamentous fungus) protein is Citrate synthase-like protein clz17.